Consider the following 757-residue polypeptide: Transferrin receptor protein 1 (757 aa).

At Met1 to Cys67 the chain is on the cytoplasmic side. Residues Met1–Cys67 form a mediates interaction with SH3BP4 region. Residues Ser10 and Ser19 each carry the phosphoserine modification. Tyr20 is modified (phosphotyrosine). Positions Tyr20–Phe23 match the Endocytosis signal motif. Position 21 is a phosphothreonine (Thr21). Ser24 carries the post-translational modification Phosphoserine. The Stop-transfer sequence motif lies at Lys58–Arg61. The S-palmitoyl cysteine moiety is linked to residue Cys67. A helical; Signal-anchor for type II membrane protein membrane pass occupies residues Phe68–Tyr88. Residues Cys89–Phe757 are Extracellular-facing. Thr103 is a glycosylation site (O-linked (GalNAc...) threonine). One can recognise a PA domain in the interval Ser220–Phe310. Residues Asn248 and Asn314 are each glycosylated (N-linked (GlcNAc...) asparagine). A ligand-binding region spans residues Asn566–Phe757. Residues Arg643–Asp645 carry the Cell attachment site motif. Asn719 and Asn724 each carry an N-linked (GlcNAc...) asparagine glycan.

Belongs to the peptidase M28 family. M28B subfamily. Homodimer; disulfide-linked. Binds one transferrin molecule per subunit. Interacts with SH3BP4. Interacts with STEAP3; facilitates TFRC endocytosis in erythroid precursor cells. In terms of processing, stearoylated by ZDHHC6 which inhibits TFRC-mediated activation of the JNK pathway and promotes mitochondrial fragmentation. Stearoylation does not affect iron uptake. Post-translationally, N- and O-glycosylated, phosphorylated and palmitoylated.

It localises to the cell membrane. The protein localises to the melanosome. In terms of biological role, cellular uptake of iron occurs via receptor-mediated endocytosis of ligand-occupied transferrin receptor into specialized endosomes. Endosomal acidification leads to iron release. The apotransferrin-receptor complex is then recycled to the cell surface with a return to neutral pH and the concomitant loss of affinity of apotransferrin for its receptor. Transferrin receptor is necessary for development of erythrocytes and the nervous system. Positively regulates T and B cell proliferation through iron uptake. Acts as a lipid sensor that regulates mitochondrial fusion by regulating activation of the JNK pathway. When dietary levels of stearate (C18:0) are low, promotes activation of the JNK pathway, resulting in HUWE1-mediated ubiquitination and subsequent degradation of the mitofusin MFN2 and inhibition of mitochondrial fusion. When dietary levels of stearate (C18:0) are high, TFRC stearoylation inhibits activation of the JNK pathway and thus degradation of the mitofusin MFN2. Mediates uptake of NICOL1 into fibroblasts where it may regulate extracellular matrix production. The polypeptide is Transferrin receptor protein 1 (TFRC) (Cricetulus griseus (Chinese hamster)).